The following is a 634-amino-acid chain: UPF0329 protein ECU07_1850/ECU10_0050 (634 aa).

2 stretches are compositionally biased toward basic and acidic residues: residues 354–365 (REEREKREESKG) and 397–407 (GESKEEDRGEE). The segment at 354–438 (REEREKREES…KGSGEKRISE (85 aa)) is disordered. Positions 408–417 (GGVEAEDPLE) are enriched in acidic residues.

It belongs to the UPF0329 family.

The sequence is that of UPF0329 protein ECU07_1850/ECU10_0050 from Encephalitozoon cuniculi (strain GB-M1) (Microsporidian parasite).